The following is a 195-amino-acid chain: Holliday junction branch migration complex subunit RuvA (195 aa).

Residues 1-63 form a domain I region; sequence MIASVRGEVL…EDSQTLYGFA (63 aa). A domain II region spans residues 64–138; sequence DSDARDLFLT…DKVGSSTSSG (75 aa). A flexible linker region spans residues 138-142; sequence GVAAA. The domain III stretch occupies residues 143–195; that stretch reads GGHGIRGPVVEALVGLGFAVKQAEEATDKVLANDPEATTSSALRAALSMLGKK.

The protein belongs to the RuvA family. In terms of assembly, homotetramer. Forms an RuvA(8)-RuvB(12)-Holliday junction (HJ) complex. HJ DNA is sandwiched between 2 RuvA tetramers; dsDNA enters through RuvA and exits via RuvB. An RuvB hexamer assembles on each DNA strand where it exits the tetramer. Each RuvB hexamer is contacted by two RuvA subunits (via domain III) on 2 adjacent RuvB subunits; this complex drives branch migration. In the full resolvosome a probable DNA-RuvA(4)-RuvB(12)-RuvC(2) complex forms which resolves the HJ.

It is found in the cytoplasm. Functionally, the RuvA-RuvB-RuvC complex processes Holliday junction (HJ) DNA during genetic recombination and DNA repair, while the RuvA-RuvB complex plays an important role in the rescue of blocked DNA replication forks via replication fork reversal (RFR). RuvA specifically binds to HJ cruciform DNA, conferring on it an open structure. The RuvB hexamer acts as an ATP-dependent pump, pulling dsDNA into and through the RuvAB complex. HJ branch migration allows RuvC to scan DNA until it finds its consensus sequence, where it cleaves and resolves the cruciform DNA. This Mycolicibacterium gilvum (strain PYR-GCK) (Mycobacterium gilvum (strain PYR-GCK)) protein is Holliday junction branch migration complex subunit RuvA.